The sequence spans 201 residues: Ubiquinone biosynthesis accessory factor UbiJ (201 aa).

One can recognise an SCP2 domain in the interval 15–112; the sequence is LNTFLYRSPA…QVVQNFVALA (98 aa).

This sequence belongs to the UbiJ family. In terms of assembly, component of the Ubi complex metabolon, which regroups five ubiquinone biosynthesis proteins (UbiE, UbiF, UbiG, UbiH and UbiI) and two accessory factors (UbiK and the lipid-binding protein UbiJ). Interacts with UbiK and forms a complex composed of 2 UbiK subunits and 1 UbiJ subunit. The UbiK-UbiJ complex interacts with palmitoleic acid.

The protein resides in the cytoplasm. It participates in cofactor biosynthesis; ubiquinone biosynthesis. In terms of biological role, required for ubiquinone (coenzyme Q) biosynthesis under aerobic conditions. Binds hydrophobic ubiquinone biosynthetic intermediates via its SCP2 domain and is essential for the stability of the Ubi complex. May constitute a docking platform where Ubi enzymes assemble and access their SCP2-bound polyprenyl substrates. This chain is Ubiquinone biosynthesis accessory factor UbiJ, found in Escherichia coli (strain K12).